The primary structure comprises 518 residues: ATP synthase subunit alpha (518 aa).

169–176 (GDRQTGKT) contacts ATP.

Belongs to the ATPase alpha/beta chains family. F-type ATPases have 2 components, CF(1) - the catalytic core - and CF(0) - the membrane proton channel. CF(1) has five subunits: alpha(3), beta(3), gamma(1), delta(1), epsilon(1). CF(0) has three main subunits: a(1), b(2) and c(9-12). The alpha and beta chains form an alternating ring which encloses part of the gamma chain. CF(1) is attached to CF(0) by a central stalk formed by the gamma and epsilon chains, while a peripheral stalk is formed by the delta and b chains.

The protein resides in the cell membrane. The enzyme catalyses ATP + H2O + 4 H(+)(in) = ADP + phosphate + 5 H(+)(out). In terms of biological role, produces ATP from ADP in the presence of a proton gradient across the membrane. The alpha chain is a regulatory subunit. The sequence is that of ATP synthase subunit alpha from Mycoplasma genitalium (strain ATCC 33530 / DSM 19775 / NCTC 10195 / G37) (Mycoplasmoides genitalium).